A 72-amino-acid chain; its full sequence is Peptide Ctri9194 (72 aa).

The N-terminal stretch at 1–23 (MKTQNVLLSFGIVFLMISFSSET) is a signal peptide. Ile-38 carries the isoleucine amide modification. The propeptide occupies 42-72 (SLKDVESLDFLFDPTFTAADLAVLENALEDY).

The protein belongs to the non-disulfide-bridged peptide (NDBP) superfamily. Short antimicrobial peptide (group 4) family. As to expression, expressed by the venom gland.

It is found in the secreted. In terms of biological role, antimicrobial peptide. The chain is Peptide Ctri9194 from Chaerilus tricostatus (Scorpion).